The chain runs to 306 residues: High osmolarity signaling protein MOS1 (306 aa).

At 1 to 23 (MEHSRPYGGRKRMSLGNILGDPF) the chain is on the cytoplasmic side. Residues 24-44 (ALATISISLLAWFITFISCVI) traverse the membrane as a helical segment. The Extracellular segment spans residues 45–67 (AQVQANKNKGLPDKDNPDGNFPP). A helical membrane pass occupies residues 68–88 (FAWWAVVYSLFLIVGVVIVVA). Residues 89–96 (SDAIQTYH) lie on the Cytoplasmic side of the membrane. A helical transmembrane segment spans residues 97 to 117 (VAVTGYLAGGMVLVTSGVNSL). Over 118-126 (VYSKNGARE) the chain is Extracellular. A helical membrane pass occupies residues 127 to 147 (AAAAGFILLSMVVIVWIFYFG). Over 148–306 (STPSSTPRAF…IAPSNYLILL (159 aa)) the chain is Cytoplasmic. Positions 204-242 (FENPSPVGGASQAPTAPTMPTYGNNTMQPNNKSNDEEVL) are disordered. The segment covering 224–235 (TYGNNTMQPNNK) has biased composition (polar residues). The SH3 domain occupies 246–306 (DYPYQAKAIY…IAPSNYLILL (61 aa)).

Belongs to the SHO1 family. As to quaternary structure, forms homooligomers.

It localises to the cell membrane. Functionally, plasma membrane osmosensor that activates the high osmolarity glycerol (HOG) MAPK signaling pathway in response to high osmolarity. Affects fungal virulence. This chain is High osmolarity signaling protein MOS1 (MOS1), found in Metarhizium robertsii (strain ARSEF 23 / ATCC MYA-3075) (Metarhizium anisopliae (strain ARSEF 23)).